We begin with the raw amino-acid sequence, 221 residues long: 3-isopropylmalate dehydratase small subunit (221 aa).

Belongs to the LeuD family. LeuD type 1 subfamily. In terms of assembly, heterodimer of LeuC and LeuD.

The catalysed reaction is (2R,3S)-3-isopropylmalate = (2S)-2-isopropylmalate. It participates in amino-acid biosynthesis; L-leucine biosynthesis; L-leucine from 3-methyl-2-oxobutanoate: step 2/4. Its function is as follows. Catalyzes the isomerization between 2-isopropylmalate and 3-isopropylmalate, via the formation of 2-isopropylmaleate. This chain is 3-isopropylmalate dehydratase small subunit, found in Nitrosomonas europaea (strain ATCC 19718 / CIP 103999 / KCTC 2705 / NBRC 14298).